The following is a 75-amino-acid chain: UPF0352 protein YPTB1297 (75 aa).

It belongs to the UPF0352 family.

The protein is UPF0352 protein YPTB1297 of Yersinia pseudotuberculosis serotype I (strain IP32953).